Here is a 1679-residue protein sequence, read N- to C-terminus: Protein MLP2 (1679 aa).

Coiled coils occupy residues 32–176 (AKFE…KYDT), 233–466 (YNKF…RQVK), 516–1064 (FSNV…EREL), and 1099–1491 (KLVS…ENAG). 3 short sequence motifs (bipartite nuclear localization signal) span residues 417 to 433 (KRSTELLETVSLTKRKQ), 639 to 655 (RKELLIYKKSQCKKKTT), and 1433 to 1449 (KKEWLKEYEDETLRRIK). Disordered stretches follow at residues 1495-1521 (FLDNKGSGEDAEEELWNSPSKGNSERP) and 1632-1679 (DLTN…ASNE). Composition is skewed to polar residues over residues 1511 to 1520 (NSPSKGNSER) and 1646 to 1661 (IGSTSKRPIESGTSSD). At Ser1512 the chain carries Phosphoserine. Over residues 1662 to 1671 (PDTKKVKESP) the composition is skewed to basic and acidic residues. Ser1670 is subject to Phosphoserine.

As to quaternary structure, component of the nuclear complex (NPC). NPC constitutes the exclusive means of nucleocytoplasmic transport. NPCs allow the passive diffusion of ions and small molecules and the active, nuclear transport receptor-mediated bidirectional transport of macromolecules such as proteins, RNAs, ribonucleoparticles (RNPs), and ribosomal subunits across the nuclear envelope. Due to its 8-fold rotational symmetry, all subunits are present with 8 copies or multiples thereof. Interacts with NUP60 and NIC96, which tether it to the nuclear pore complex. Component of the spindle pole body core in which it interacts directly with SPC110, SPC42 and SPC29. Also interacts with YKU70 (HDF1) and MLP1.

The protein localises to the nucleus. It is found in the cytoplasm. The protein resides in the cytoskeleton. It localises to the microtubule organizing center. Its subcellular location is the spindle pole body. The protein localises to the nuclear pore complex. Together with the closely related MLP1, involved in the structural and functional organization of perinuclear chromatin. MLP1/MLP2 associate with the nuclear pore complex and form filamentous structures along the nuclear periphery. Has a role in the localization of Esc1 to nucleolar regions. Together with MLP1, mediates tethering of the some telomeres to the nuclear periphery, probably mediated by YKU70/YKU80 (HDF1/HDF2) heterodimer and show perinuclear location dependent silencing. MLP1 and MLP2 are involved in telomere length regulation but not silencing or telomere anchoring. Plays a role in the incorporation of components into the spindle pole body. Involved in double-strand break repair, probably also mediated by the YKU70/YKU80 (HDF1/HDF2) heterodimer. This is Protein MLP2 (MLP2) from Saccharomyces cerevisiae (strain ATCC 204508 / S288c) (Baker's yeast).